Here is a 1121-residue protein sequence, read N- to C-terminus: Putative ATP-dependent RNA helicase ECM32 (1121 aa).

Positions 157–187 (NSTRKPRKKGGRRVGRGKKGRKGAKIKKEKK) are disordered. Basic residues predominate over residues 160–184 (RKPRKKGGRRVGRGKKGRKGAKIKK). The residue at position 227 (S227) is a Phosphoserine. The tract at residues 233–452 (AKVSKSETSR…NQEKNNGKTK (220 aa)) is disordered. Over residues 251–263 (NKGKGNKANHKKN) the composition is skewed to basic residues. A compositionally biased stretch (polar residues) spans 278–287 (IRNNVRNSQP). Over residues 307–316 (GKNESVDKHQ) the composition is skewed to basic and acidic residues. The segment covering 323–336 (LNGNGSGSTNTTGL) has biased composition (low complexity). Positions 342–363 (DHAGQKTKGNDKTGNKNPREAK) are enriched in basic and acidic residues. Over residues 376 to 413 (KSNNQPNKGTSRWTIGSDTESSREPSISPNENTTSITK) the composition is skewed to polar residues. Position 392 is a phosphoserine (S392). A compositionally biased stretch (basic and acidic residues) spans 426–452 (LNEKSKTTTMPKKLETKNQEKNNGKTK). At T465 the chain carries Phosphothreonine. Residue 670–677 (GPPGTGKT) participates in ATP binding.

The protein belongs to the DNA2/NAM7 helicase family. In terms of assembly, interacts with the peptidyl release factors SUP35 and weakly with SUP45.

The protein localises to the cytoplasm. It catalyses the reaction ATP + H2O = ADP + phosphate + H(+). Its function is as follows. Probable RNA helicase, which may be involved in modulation of the translation termination process. Probably unwinds double-stranded RNA. In vitro, unwinds covalently closed, circular DNA in the presence of a DNA topoisomerase TOP1 and replication factor-A protein RFA1. The protein is Putative ATP-dependent RNA helicase ECM32 (ECM32) of Saccharomyces cerevisiae (strain ATCC 204508 / S288c) (Baker's yeast).